The following is a 273-amino-acid chain: 2,3,4,5-tetrahydropyridine-2,6-dicarboxylate N-succinyltransferase (273 aa).

The substrate site is built by Arg104 and Asp141.

Belongs to the transferase hexapeptide repeat family. In terms of assembly, homotrimer.

It is found in the cytoplasm. The enzyme catalyses (S)-2,3,4,5-tetrahydrodipicolinate + succinyl-CoA + H2O = (S)-2-succinylamino-6-oxoheptanedioate + CoA. The protein operates within amino-acid biosynthesis; L-lysine biosynthesis via DAP pathway; LL-2,6-diaminopimelate from (S)-tetrahydrodipicolinate (succinylase route): step 1/3. This is 2,3,4,5-tetrahydropyridine-2,6-dicarboxylate N-succinyltransferase from Nitrosococcus oceani (strain ATCC 19707 / BCRC 17464 / JCM 30415 / NCIMB 11848 / C-107).